Reading from the N-terminus, the 274-residue chain is NH(3)-dependent NAD(+) synthetase (274 aa).

Residue 46–53 (GISGGQDS) participates in ATP binding. Asp52 contacts Mg(2+). Residue Arg140 coordinates deamido-NAD(+). Thr160 lines the ATP pocket. A Mg(2+)-binding site is contributed by Glu165. Deamido-NAD(+) is bound by residues Lys173 and Asp180. 2 residues coordinate ATP: Lys189 and Thr211. 260-261 (HK) provides a ligand contact to deamido-NAD(+).

The protein belongs to the NAD synthetase family. In terms of assembly, homodimer.

The enzyme catalyses deamido-NAD(+) + NH4(+) + ATP = AMP + diphosphate + NAD(+) + H(+). Its pathway is cofactor biosynthesis; NAD(+) biosynthesis; NAD(+) from deamido-NAD(+) (ammonia route): step 1/1. Functionally, catalyzes the ATP-dependent amidation of deamido-NAD to form NAD. Uses ammonia as a nitrogen source. The polypeptide is NH(3)-dependent NAD(+) synthetase (Streptococcus pneumoniae serotype 19F (strain G54)).